The following is a 963-amino-acid chain: Glycine dehydrogenase (decarboxylating) (963 aa).

Lys710 is subject to N6-(pyridoxal phosphate)lysine.

This sequence belongs to the GcvP family. In terms of assembly, the glycine cleavage system is composed of four proteins: P, T, L and H. Pyridoxal 5'-phosphate serves as cofactor.

It carries out the reaction N(6)-[(R)-lipoyl]-L-lysyl-[glycine-cleavage complex H protein] + glycine + H(+) = N(6)-[(R)-S(8)-aminomethyldihydrolipoyl]-L-lysyl-[glycine-cleavage complex H protein] + CO2. The glycine cleavage system catalyzes the degradation of glycine. The P protein binds the alpha-amino group of glycine through its pyridoxal phosphate cofactor; CO(2) is released and the remaining methylamine moiety is then transferred to the lipoamide cofactor of the H protein. This Pseudoalteromonas translucida (strain TAC 125) protein is Glycine dehydrogenase (decarboxylating).